The primary structure comprises 673 residues: Polyunsaturated fatty acid 5-lipoxygenase (673 aa).

Residues Pro2–Lys117 enclose the PLAT domain. 8 residues coordinate Ca(2+): Gly17, Thr18, Asp19, Asn44, Asp45, Glu47, Asp79, and Asp80. The 556-residue stretch at Leu118 to Ile673 folds into the Lipoxygenase domain. Position 271 is a phosphoserine (Ser271). Residues His367 and His372 each coordinate Fe cation. Ser523 carries the phosphoserine modification. Residues His550, Asn554, and Ile673 each contribute to the Fe cation site.

It belongs to the lipoxygenase family. As to quaternary structure, homodimer. Interacts with ALOX5AP and LTC4S. Interacts with COTL1, the interaction is required for stability and efficient catalytic activity. Interacts with PIK3R1; this interaction bridges ALOX5 with CD40 after CD40 ligation in B cells and leads to the production of reactive oxygen species (ROS). Interacts (via PLAT domain) with DICER1 (via Dicer dsRNA-binding fold domain); this interaction enhances arachidonate 5-lipoxygenase activity and modifies the miRNA precursor processing activity of DICER1. Requires Fe cation as cofactor. In terms of processing, serine phosphorylation by MAPKAPK2 is stimulated by arachidonic acid. Phosphorylation on Ser-523 by PKA has an inhibitory effect. Phosphorylation on Ser-271 prevents export from the nucleus. Phosphorylation at Ser-523 is stimulated by 8-bromo-3',5'-cyclic AMP or prostaglandin E2.

Its subcellular location is the cytoplasm. The protein resides in the nucleus matrix. The protein localises to the nucleus membrane. It is found in the perinuclear region. It localises to the cytosol. Its subcellular location is the nucleus envelope. The protein resides in the nucleus intermembrane space. It catalyses the reaction (5Z,8Z,11Z,14Z)-eicosatetraenoate + O2 = leukotriene A4 + H2O. The enzyme catalyses 18-HEPE + O2 = (5S)-hydroperoxy-18-hydroxy-(7E,9E,11Z,14Z,16E)-eicosapentaenoate. It carries out the reaction (18R)-hydroxy-(5Z,8Z,11Z,14Z,16E)-eicosapentaenoate + O2 = (5S)-hydroperoxy-(18R)-hydroxy-(6E,8Z,11Z,14Z,16E)-eicosapentaenoate. The catalysed reaction is (18S)-hydroxy-(5Z,8Z,11Z,14Z,16E)-eicosapentaenoate + O2 = (5S)-hydroperoxy-(18S)-hydroxy-(6E,8Z,11Z,14Z,16E)-eicosapentaenoate. It catalyses the reaction (5S)-hydroperoxy-(18S)-hydroxy-(6E,8Z,11Z,14Z,16E)-eicosapentaenoate = (5S,6S)-epoxy-(18S)-hydroxy-(7E,9E,11Z,14Z,16E)-eicosapentaenoate + H2O. The enzyme catalyses (5S)-hydroperoxy-(18R)-hydroxy-(6E,8Z,11Z,14Z,16E)-eicosapentaenoate = (5S,6S)-epoxy-(18R)-hydroxy-(7E,9E,11Z,14Z,16E)-eicosapentaenoate + H2O. It carries out the reaction (5S)-hydroperoxy-18-hydroxy-(7E,9E,11Z,14Z,16E)-eicosapentaenoate = (5S,6S)-epoxy-18-hydroxy-(7E,9E,11Z,14Z,16E)-eicosapentaenoate + H2O. The catalysed reaction is (5Z,8Z,11Z,14Z)-eicosatetraenoate + O2 = (5S)-hydroperoxy-(6E,8Z,11Z,14Z)-eicosatetraenoate. It catalyses the reaction (15S)-hydroxy-(5Z,8Z,11Z,13E)-eicosatetraenoate + O2 = (5S)-hydroperoxy-(15S)-hydroxy-(6E,8Z,11Z,13E)-eicosatetraenoate. The enzyme catalyses (5S)-hydroperoxy-(6E,8Z,11Z,14Z)-eicosatetraenoate = leukotriene A4 + H2O. It carries out the reaction (5Z,8Z,11Z,14Z)-eicosatetraenoate + O2 = (8S)-hydroperoxy-(5Z,9E,11Z,14Z)-eicosatetraenoate. The catalysed reaction is (5Z,8Z,11Z,14Z)-eicosatetraenoate + O2 = (12S)-hydroperoxy-(5Z,8Z,10E,14Z)-eicosatetraenoate. It catalyses the reaction (5Z,8Z)-eicosadienoate + O2 = (5S)-hydroperoxy-(6E,8Z)-eicosadienoate. The enzyme catalyses (12S)-hydroxy-(5Z,8Z,10E,14Z)-eicosatetraenoate + O2 = (5S)-hydroperoxy-(12S)-hydroxy-(6E,8Z,10E,14Z)-eicosatetraenoate. It carries out the reaction (5Z,8Z,11Z,14Z,17Z)-eicosapentaenoate + O2 = 5-hydroperoxy-(6E,8Z,11Z,14Z,17Z)-eicosapentaenoate. The catalysed reaction is (4Z,7Z,10Z,13Z,16Z,19Z)-docosahexaenoate + O2 = (14S)-hydroperoxy-(4Z,7Z,10Z,12E,16Z,19Z)-docosahexaenoate. It catalyses the reaction (4Z,7Z,10Z,13Z,16Z,19Z)-docosahexaenoate + O2 = (7S)-hydroperoxy-(4Z,8E,10Z,13Z,16Z,19Z)-docosahexaenoate. The enzyme catalyses (4Z,7Z,10Z,13Z,16Z,19Z)-docosahexaenoate + O2 = (17S)-hydroperoxy-(4Z,7Z,10Z,13Z,15E,19Z)-docosahexaenoate. Its pathway is lipid metabolism; leukotriene A4 biosynthesis. Its function is as follows. Catalyzes the oxygenation of arachidonate to 5-hydroperoxyeicosatetraenoate (5-HPETE) followed by the dehydration to 5,6- epoxyeicosatetraenoate (Leukotriene A4/LTA4), the first two steps in the biosynthesis of leukotrienes, which are potent mediators of inflammation. Also catalyzes the oxygenation of arachidonate into 8-hydroperoxyicosatetraenoate (8-HPETE) and 12-hydroperoxyicosatetraenoate (12-HPETE). Displays lipoxin synthase activity being able to convert (15S)-HETE into a conjugate tetraene. Although arachidonate is the preferred substrate, this enzyme can also metabolize oxidized fatty acids derived from arachidonate such as (15S)-HETE, eicosapentaenoate (EPA) such as (18R)- and (18S)-HEPE or docosahexaenoate (DHA) which lead to the formation of specialized pro-resolving mediators (SPM) lipoxin and resolvins E and D respectively, therefore it participates in anti-inflammatory responses. Oxidation of DHA directly inhibits endothelial cell proliferation and sprouting angiogenesis via peroxisome proliferator-activated receptor gamma (PPARgamma). It does not catalyze the oxygenation of linoleic acid and does not convert (5S)-HETE to lipoxin isomers. In addition to inflammatory processes, it participates in dendritic cell migration, wound healing through an antioxidant mechanism based on heme oxygenase-1 (HO-1) regulation expression, monocyte adhesion to the endothelium via ITGAM expression on monocytes. Moreover, it helps establish an adaptive humoral immunity by regulating primary resting B cells and follicular helper T cells and participates in the CD40-induced production of reactive oxygen species (ROS) after CD40 ligation in B cells through interaction with PIK3R1 that bridges ALOX5 with CD40. May also play a role in glucose homeostasis, regulation of insulin secretion and palmitic acid-induced insulin resistance via AMPK. Can regulate bone mineralization and fat cell differentiation increases in induced pluripotent stem cells. This chain is Polyunsaturated fatty acid 5-lipoxygenase, found in Mesocricetus auratus (Golden hamster).